A 331-amino-acid polypeptide reads, in one-letter code: Cytosolic Fe-S cluster assembly factor NBP35 (331 aa).

Residues 1–10 (MSPSQTQIEK) are compositionally biased toward polar residues. Residues 1 to 32 (MSPSQTQIEKSQLAAPEPEHCPGPESELAGQG) are disordered. [4Fe-4S] cluster is bound by residues Cys-21, Cys-35, Cys-38, and Cys-44. 75–82 (GKGGVGKS) contributes to the ATP binding site. [4Fe-4S] cluster contacts are provided by Cys-249 and Cys-252.

Belongs to the Mrp/NBP35 ATP-binding proteins family. NUBP1/NBP35 subfamily. In terms of assembly, heterotetramer of 2 NBP35 and 2 CFD1 chains. The cofactor is [4Fe-4S] cluster.

The protein localises to the cytoplasm. The protein resides in the nucleus. Functionally, component of the cytosolic iron-sulfur (Fe/S) protein assembly (CIA) machinery. Required for maturation of extramitochondrial Fe-S proteins. The NBP35-CFD1 heterotetramer forms a Fe-S scaffold complex, mediating the de novo assembly of an Fe-S cluster and its transfer to target apoproteins. Required for biogenesis and export of both ribosomal subunits, which may reflect a role in assembly of the Fe/S clusters in RLI1, a protein which performs rRNA processing and ribosome export. This chain is Cytosolic Fe-S cluster assembly factor NBP35, found in Candida albicans (strain SC5314 / ATCC MYA-2876) (Yeast).